We begin with the raw amino-acid sequence, 160 residues long: Major pollen allergen Bet v 1-M/N (160 aa).

4 residues coordinate brassinolide: K55, Y82, Y84, and N101.

It belongs to the BetVI family.

The protein localises to the cytoplasm. Functionally, may be a general steroid carrier protein. In Betula pendula (European white birch), this protein is Major pollen allergen Bet v 1-M/N (BETV1M).